Here is a 91-residue protein sequence, read N- to C-terminus: M-myrmeciitoxin-Mb3a (91 aa).

Positions 1-21 (MKLSCLSLALAIILILAIVHS) are cleaved as a signal peptide. Positions 22-54 (PNMEVKALADPEADAFGEANAFGEADAFAEANA) are excised as a propeptide.

In terms of assembly, homodimer; disulfide-linked. In terms of tissue distribution, expressed by the venom gland and reservoir.

It localises to the secreted. Causes a significant and dose-dependent histamine release, probably by influencing the signal transduction of mast cells through a non-IgE-mediated pathway. This peptide does not have cytotoxic activities. This Myrmecia banksi (Jack jumper ant) protein is M-myrmeciitoxin-Mb3a.